A 67-amino-acid chain; its full sequence is uncharacterized protein (67 aa).

A run of 2 helical transmembrane segments spans residues 13–32 (IACLRSLSIKILIICHGFIV) and 42–64 (RLTNFFSIMILLTFSNFSRTLGL).

The protein localises to the membrane. This is an uncharacterized protein from Saccharomyces cerevisiae (strain ATCC 204508 / S288c) (Baker's yeast).